We begin with the raw amino-acid sequence, 500 residues long: Bifunctional protein GlmU (500 aa).

The segment at 1–242 (MPVQTAVVVL…SAKVAGANDR (242 aa)) is pyrophosphorylase. Residues 10-13 (LAAG), Lys24, Gln81, and 86-87 (GT) contribute to the UDP-N-acetyl-alpha-D-glucosamine site. Asp112 contacts Mg(2+). Residues Gly151, Glu167, Asn182, and Asn240 each contribute to the UDP-N-acetyl-alpha-D-glucosamine site. Asn240 is a Mg(2+) binding site. The tract at residues 243-263 (VQLSRLAAELNRRTVENWMRA) is linker. The interval 264-500 (GVTVVDPSTT…KQDLKDGIEQ (237 aa)) is N-acetyltransferase. The UDP-N-acetyl-alpha-D-glucosamine site is built by Arg345 and Lys363. The Proton acceptor role is filled by His375. Residues Tyr378 and Asn389 each coordinate UDP-N-acetyl-alpha-D-glucosamine. Residues Ala392, 398 to 399 (NY), Ser417, and Ala435 each bind acetyl-CoA. Residues 472 to 500 (AEAAAAAGLHHSSDLHETEKQDLKDGIEQ) are disordered. Over residues 482–500 (HSSDLHETEKQDLKDGIEQ) the composition is skewed to basic and acidic residues.

The protein in the N-terminal section; belongs to the N-acetylglucosamine-1-phosphate uridyltransferase family. In the C-terminal section; belongs to the transferase hexapeptide repeat family. Homotrimer. Mg(2+) serves as cofactor.

The protein localises to the cytoplasm. It carries out the reaction alpha-D-glucosamine 1-phosphate + acetyl-CoA = N-acetyl-alpha-D-glucosamine 1-phosphate + CoA + H(+). It catalyses the reaction N-acetyl-alpha-D-glucosamine 1-phosphate + UTP + H(+) = UDP-N-acetyl-alpha-D-glucosamine + diphosphate. It functions in the pathway nucleotide-sugar biosynthesis; UDP-N-acetyl-alpha-D-glucosamine biosynthesis; N-acetyl-alpha-D-glucosamine 1-phosphate from alpha-D-glucosamine 6-phosphate (route II): step 2/2. Its pathway is nucleotide-sugar biosynthesis; UDP-N-acetyl-alpha-D-glucosamine biosynthesis; UDP-N-acetyl-alpha-D-glucosamine from N-acetyl-alpha-D-glucosamine 1-phosphate: step 1/1. It participates in bacterial outer membrane biogenesis; LPS lipid A biosynthesis. Its function is as follows. Catalyzes the last two sequential reactions in the de novo biosynthetic pathway for UDP-N-acetylglucosamine (UDP-GlcNAc). The C-terminal domain catalyzes the transfer of acetyl group from acetyl coenzyme A to glucosamine-1-phosphate (GlcN-1-P) to produce N-acetylglucosamine-1-phosphate (GlcNAc-1-P), which is converted into UDP-GlcNAc by the transfer of uridine 5-monophosphate (from uridine 5-triphosphate), a reaction catalyzed by the N-terminal domain. This Rhodococcus jostii (strain RHA1) protein is Bifunctional protein GlmU.